Here is a 438-residue protein sequence, read N- to C-terminus: Na(+)/H(+) antiporter NhaA (438 aa).

11 helical membrane passes run 23–43, 62–82, 104–124, 133–153, 162–182, 185–205, 212–232, 302–322, 337–357, 372–392, and 410–430; these read FGGIFLFLNAVLAMVVANSFL, FFIGFSLHNWIDDVLMALFFL, SFPVIAAIGGMIAPGLIYFFL, GFGIPMATDIAFALGVIMLLG, VFLITLAVADDLGAIVVIALF, TNLKFAWLLGALGVVLVLAIL, SLIPYLLLGVLLWFCVHQSGI, FLAPISGYFIMPLFAFANAGV, LGVILGLCLGKPLGIFLITFI, WWHILGAGLLAGIGFTMSMFI, and IAILLGSLISGIIGALYLFAL.

It belongs to the NhaA Na(+)/H(+) (TC 2.A.33) antiporter family.

It is found in the cell inner membrane. The catalysed reaction is Na(+)(in) + 2 H(+)(out) = Na(+)(out) + 2 H(+)(in). Its function is as follows. Na(+)/H(+) antiporter that extrudes sodium in exchange for external protons. This Helicobacter pylori (strain J99 / ATCC 700824) (Campylobacter pylori J99) protein is Na(+)/H(+) antiporter NhaA.